The following is a 708-amino-acid chain: Polyribonucleotide nucleotidyltransferase (708 aa).

Residues Asp-490 and Asp-496 each coordinate Mg(2+). Residues 557-619 (PRIETMTIPK…KSIDDAIRLI (63 aa)) enclose the KH domain. In terms of domain architecture, S1 motif spans 629–699 (GEVYKGKVRS…KTGKFKLSRK (71 aa)).

This sequence belongs to the polyribonucleotide nucleotidyltransferase family. Mg(2+) is required as a cofactor.

The protein resides in the cytoplasm. The enzyme catalyses RNA(n+1) + phosphate = RNA(n) + a ribonucleoside 5'-diphosphate. In terms of biological role, involved in mRNA degradation. Catalyzes the phosphorolysis of single-stranded polyribonucleotides processively in the 3'- to 5'-direction. This is Polyribonucleotide nucleotidyltransferase from Bacteroides fragilis (strain ATCC 25285 / DSM 2151 / CCUG 4856 / JCM 11019 / LMG 10263 / NCTC 9343 / Onslow / VPI 2553 / EN-2).